A 1055-amino-acid polypeptide reads, in one-letter code: Bifunctional fucokinase/GDP-fucose pyrophosphorylase (1055 aa).

Residues 34-565 are GDP-fucose pyrophosphorylase; the sequence is WDAIVLTAAS…SSQRVSLEEL (532 aa). An L-fucokinase region spans residues 693-1055; sequence GKSHSENHIS…VKVYNWSICI (363 aa). 826-836 provides a ligand contact to ATP; sequence PRGSGLGTSSI.

Belongs to the GHMP kinase family. It depends on Mn(2+) as a cofactor. The cofactor is Mg(2+). As to expression, ubiquitous. Highest expression in flower buds.

It catalyses the reaction L-fucose + ATP = beta-L-fucose 1-phosphate + ADP + H(+). It carries out the reaction beta-L-fucose 1-phosphate + GTP + H(+) = GDP-beta-L-fucose + diphosphate. In terms of biological role, bifunctional enzyme involved in the salvage pathway which converts free L-fucose to GDP-L-fucose. Catalyzes two successive reactions, the ATP-dependent phosphorylation of L-fucose to L-fucose 1-phosphate, and its guanylylation to GDP-L-fucose. The sugar-1-kinase activity has a strict substrate specificity for L-fucose and ATP. The pyrophosphorylase activity has a strict substrate specificity for L-fucose 1-phosphate and GTP. The protein is Bifunctional fucokinase/GDP-fucose pyrophosphorylase (FKGP) of Arabidopsis thaliana (Mouse-ear cress).